Reading from the N-terminus, the 729-residue chain is Transcriptional activator ptaB (729 aa).

Residues 1-12 (MPQHPGLPPGHP) show a composition bias toward pro residues. Disordered stretches follow at residues 1–69 (MPQH…QAHA), 207–341 (AAAA…QNQA), 505–538 (LELSEQKQSPKVSKNLGKRAQQKQAQQAAPSLPE), and 614–729 (RGPQ…KGTA). Residues 38–56 (PGGPQVTQGGPMMGMPPGA) show a composition bias toward low complexity. Pro residues predominate over residues 272–285 (APQPHPTPNPPPQQ). 2 stretches are compositionally biased toward low complexity: residues 286–300 (LPQAQQPGQQPHQQP) and 307–341 (QPQQQQSQQGQPQGQQQQMTPQEAQMKAQQTQNQA). Polar residues predominate over residues 614–625 (RGPQMNGPNQFA). Residues 655–671 (GPPGMVQQGQMQPNVGQ) are compositionally biased toward low complexity. Polar residues predominate over residues 672–682 (ATSASASPQVT).

This sequence belongs to the MFG1 family. As to quaternary structure, interacts with somA.

It is found in the nucleus. In terms of biological role, transcriptional regulator that forms a complex with somA to control biofilm formation. The sequence is that of Transcriptional activator ptaB from Aspergillus fumigatus (strain ATCC MYA-4609 / CBS 101355 / FGSC A1100 / Af293) (Neosartorya fumigata).